The primary structure comprises 148 residues: Transcriptional regulator MraZ (148 aa).

2 consecutive SpoVT-AbrB domains span residues 5–53 (ETAI…AEKE) and 82–125 (SAVL…SEQA).

This sequence belongs to the MraZ family. In terms of assembly, forms oligomers.

It localises to the cytoplasm. The protein localises to the nucleoid. This Xanthomonas oryzae pv. oryzae (strain MAFF 311018) protein is Transcriptional regulator MraZ.